The primary structure comprises 403 residues: Leu/Ile/Val-binding protein homolog 8 (403 aa).

The N-terminal stretch at 1-26 (MRLSRLLIGASLGVALSSTAFTAALA) is a signal peptide.

This sequence belongs to the leucine-binding protein family.

Functionally, component of an amino-acid transport system. In Brucella suis biovar 1 (strain 1330), this protein is Leu/Ile/Val-binding protein homolog 8.